A 182-amino-acid polypeptide reads, in one-letter code: Envelope glycoprotein L (182 aa).

The first 39 residues, 1–39, serve as a signal peptide directing secretion; it reads MRRSAARGRAVSSTQTAMGAGAAIAVWAAALIALYSSCA. Residues 52 to 182 enclose the gL alphaherpesvirus-type domain; sequence ANASDTIGRL…RPEKTAPGGV (131 aa). A disulfide bridge connects residues C73 and C109.

This sequence belongs to the herpesviridae glycoprotein L (gL) family. Alphaherpesvirinae gL subfamily. In terms of assembly, interacts with glycoprotein H (gH); this interaction is necessary for the correct processing and cell surface expression of gH. The heterodimer gH/gL seems to interact with gB trimers during fusion. In terms of processing, O-glycosylated, and sialylated.

It is found in the virion membrane. It localises to the host cell membrane. The protein localises to the host Golgi apparatus. Its subcellular location is the host trans-Golgi network. Its function is as follows. The heterodimer glycoprotein H-glycoprotein L is required for the fusion of viral and plasma membranes leading to virus entry into the host cell. Acts as a functional inhibitor of gH and maintains gH in an inhibited form. Upon binding to host integrins, gL dissociates from gH leading to activation of the viral fusion glycoproteins gB and gH. The protein is Envelope glycoprotein L of Amazona oratrix (yellow-headed parrot).